We begin with the raw amino-acid sequence, 161 residues long: Endoribonuclease YbeY (161 aa).

Zn(2+) is bound by residues H121, H125, and H131.

The protein belongs to the endoribonuclease YbeY family. Zn(2+) is required as a cofactor.

Its subcellular location is the cytoplasm. Its function is as follows. Single strand-specific metallo-endoribonuclease involved in late-stage 70S ribosome quality control and in maturation of the 3' terminus of the 16S rRNA. This is Endoribonuclease YbeY from Xylella fastidiosa (strain M23).